We begin with the raw amino-acid sequence, 361 residues long: Large ribosomal subunit protein uL3 (361 aa).

The segment covering 1–14 has biased composition (basic residues); the sequence is MGRGGRRNPGRPRR. 2 disordered regions span residues 1–33 and 337–361; these read MGRGGRRNPGRPRRGSLAFSPRKRASRPVPRIR and TSQQGVRPKASEDEIVEQLGGPASA.

It belongs to the universal ribosomal protein uL3 family. In terms of assembly, part of the 50S ribosomal subunit. Forms a cluster with proteins L14 and L24e.

In terms of biological role, one of the primary rRNA binding proteins, it binds directly near the 3'-end of the 23S rRNA, where it nucleates assembly of the 50S subunit. The protein is Large ribosomal subunit protein uL3 of Methanopyrus kandleri (strain AV19 / DSM 6324 / JCM 9639 / NBRC 100938).